Reading from the N-terminus, the 56-residue chain is Sec-independent protein translocase protein TatA (56 aa).

Residues 1–21 (MALGPWQIFLILVIILVLFGA) traverse the membrane as a helical segment.

It belongs to the TatA/E family. As to quaternary structure, the Tat system comprises two distinct complexes: a TatABC complex, containing multiple copies of TatA, TatB and TatC subunits, and a separate TatA complex, containing only TatA subunits. Substrates initially bind to the TatABC complex, which probably triggers association of the separate TatA complex to form the active translocon.

It localises to the cell inner membrane. Its function is as follows. Part of the twin-arginine translocation (Tat) system that transports large folded proteins containing a characteristic twin-arginine motif in their signal peptide across membranes. TatA could form the protein-conducting channel of the Tat system. The chain is Sec-independent protein translocase protein TatA from Ehrlichia ruminantium (strain Welgevonden).